The sequence spans 133 residues: Snaclec A9 (133 aa).

Intrachain disulfides connect cysteine 4–cysteine 15, cysteine 32–cysteine 131, and cysteine 106–cysteine 123. Residues 11–132 form the C-type lectin domain; sequence YEGHCYKVFN…CGQPYRFTCE (122 aa).

This sequence belongs to the snaclec family. Heterodimer; disulfide-linked. As to expression, expressed by the venom gland.

It localises to the secreted. In terms of biological role, interferes with one step of hemostasis (modulation of platelet aggregation, or coagulation cascade, for example). This Macrovipera lebetinus (Levantine viper) protein is Snaclec A9.